The chain runs to 438 residues: tRNA-2-methylthio-N(6)-dimethylallyladenosine synthase (438 aa).

The region spanning 2–118 is the MTTase N-terminal domain; sequence KSFYLETFGC…LADMVRDAEL (117 aa). 6 residues coordinate [4Fe-4S] cluster: cysteine 11, cysteine 47, cysteine 81, cysteine 157, cysteine 161, and cysteine 164. Positions 143 to 373 constitute a Radical SAM core domain; that stretch reads PSAEVSRFVT…LALQEEITRQ (231 aa). The region spanning 376-438 is the TRAM domain; sequence QMDIGQVLPV…YRNSHLGERV (63 aa).

The protein belongs to the methylthiotransferase family. MiaB subfamily. In terms of assembly, monomer. [4Fe-4S] cluster is required as a cofactor.

The protein resides in the cytoplasm. It carries out the reaction N(6)-dimethylallyladenosine(37) in tRNA + (sulfur carrier)-SH + AH2 + 2 S-adenosyl-L-methionine = 2-methylsulfanyl-N(6)-dimethylallyladenosine(37) in tRNA + (sulfur carrier)-H + 5'-deoxyadenosine + L-methionine + A + S-adenosyl-L-homocysteine + 2 H(+). Its function is as follows. Catalyzes the methylthiolation of N6-(dimethylallyl)adenosine (i(6)A), leading to the formation of 2-methylthio-N6-(dimethylallyl)adenosine (ms(2)i(6)A) at position 37 in tRNAs that read codons beginning with uridine. The protein is tRNA-2-methylthio-N(6)-dimethylallyladenosine synthase of Syntrophotalea carbinolica (strain DSM 2380 / NBRC 103641 / GraBd1) (Pelobacter carbinolicus).